Consider the following 607-residue polypeptide: Matrix metalloproteinase-16 (607 aa).

An N-terminal signal peptide occupies residues 1–31 (MILLAFSSGRRLDFVHRSGVFFFQTLLWILC). A propeptide spanning residues 32–119 (ATVCGTEQYF…SSKFNIRRKR (88 aa)) is cleaved from the precursor. Asn-83 is a glycosylation site (N-linked (GlcNAc...) asparagine). The Cysteine switch motif lies at 99–106 (PRCGVPDQ). Cys-101 is a Zn(2+) binding site. The Extracellular segment spans residues 120-564 (YALTGQKWQH…LDNTASTVKA (445 aa)). Residue Asp-183 coordinates Ca(2+). Residues His-193 and Asp-195 each contribute to the Zn(2+) site. Ca(2+) is bound by residues Asp-200, Gly-201, Gly-203, and Phe-205. His-208 is a Zn(2+) binding site. Ca(2+)-binding residues include Gly-215, Gly-217, and Asp-219. Residue His-221 participates in Zn(2+) binding. The Ca(2+) site is built by Asp-223 and Glu-226. His-246 is a Zn(2+) binding site. Glu-247 is an active-site residue. Positions 250 and 256 each coordinate Zn(2+). Residues 281–340 (DDLQGIQKIYGPPDKIPPPTRPLPTVPPHRSVPPADPRKNDRPKPPRPPTGRPSYPGAKP) form a disordered region. A compositionally biased stretch (pro residues) spans 294–315 (DKIPPPTRPLPTVPPHRSVPPA). Hemopexin repeat units follow at residues 340-388 (PNIC…WRGL), 389-434 (PPSI…GNGI), 436-484 (PHGI…KGIP), and 485-532 (ESPQ…FMGC). A disulfide bridge connects residues Cys-343 and Cys-532. Residues 565 to 585 (IAIVIPCILALCLLVLVYTVF) traverse the membrane as a helical segment. The Cytoplasmic portion of the chain corresponds to 586–607 (QFKRKGTPRHILYCKRSMQEWV).

The protein belongs to the peptidase M10A family. As to quaternary structure, interacts with CSPG4 through CSPG4 chondroitin sulfate glycosaminoglycan. Zn(2+) serves as cofactor. It depends on Ca(2+) as a cofactor. The precursor is cleaved by a furin endopeptidase. Strongly expressed in the lung, brain and smooth muscle cells. Weakly detectable in the spleen and liver and indetectable in the heart, skeletal muscle and kidney.

The protein resides in the cell membrane. It is found in the secreted. The protein localises to the extracellular space. Its subcellular location is the extracellular matrix. Its function is as follows. Endopeptidase that degrades various components of the extracellular matrix, such as collagen type III and fibronectin. Activates progelatinase A. Involved in the matrix remodeling of blood vessels. The short isoform efficiently converts progelatinase A to the intermediate form but not to the mature one. It has no effect on type I, II, IV and V collagen. However, upon interaction with CSPG4, it may be involved in degradation and invasion of type I collagen by melanoma cells. The sequence is that of Matrix metalloproteinase-16 (Mmp16) from Rattus norvegicus (Rat).